We begin with the raw amino-acid sequence, 685 residues long: Sodium-dependent phosphate transporter 1 (685 aa).

Transmembrane regions (helical) follow at residues 25–45 (FLWMLVLGFVIAFVLAFSVGA), 66–86 (ACILASIFETVGSVLLGAKVS), 106–126 (LMAGSISAMFGSAVWQLAASF), 162–182 (IVLSWFISPLLSGIMSALLFY), 201–221 (ALPIFYACTIGVNLFSIMYSG), and 234–254 (GIILISVGCAVLCALVVWFFV). Positions 482 to 492 (VEAEEQEEGSI) are enriched in acidic residues. The disordered stretch occupies residues 482–513 (VEAEEQEEGSIEDVATDRKSSSSSLEERHDQD). Over residues 496-513 (ATDRKSSSSSLEERHDQD) the composition is skewed to basic and acidic residues. 4 consecutive transmembrane segments (helical) span residues 517 to 537 (VSLLFQFLQILTACFGSFAHG), 565 to 585 (ATPIWLLLYGGVGICIGLWVW), 606 to 626 (FSIELASALTVVIASNVGLPI), and 656 to 676 (IFLAWFVTVPISGLISAAIMA).

This sequence belongs to the inorganic phosphate transporter (PiT) (TC 2.A.20) family.

It is found in the cell membrane. It carries out the reaction 2 Na(+)(out) + phosphate(out) = 2 Na(+)(in) + phosphate(in). Its function is as follows. Sodium-phosphate symporter which preferentially transports the monovalent form of phosphate with a stoichiometry of two sodium ions per phosphate ion. This Xenopus tropicalis (Western clawed frog) protein is Sodium-dependent phosphate transporter 1 (slc20a1).